Consider the following 404-residue polypeptide: Serine/threonine transporter SstT (404 aa).

9 helical membrane passes run 17 to 37, 39 to 59, 75 to 95, 138 to 158, 179 to 199, 212 to 232, 287 to 307, 319 to 339, and 354 to 374; these read IGIG…VTAI, ILGQ…VFAL, MTLI…VAVI, ALAT…GLAL, IVVW…FSTV, LLIL…NPLL, IPLG…VLTL, FLTA…ASGV, and FGIS…VGVI.

It belongs to the dicarboxylate/amino acid:cation symporter (DAACS) (TC 2.A.23) family.

It localises to the cell membrane. The enzyme catalyses L-serine(in) + Na(+)(in) = L-serine(out) + Na(+)(out). It carries out the reaction L-threonine(in) + Na(+)(in) = L-threonine(out) + Na(+)(out). Involved in the import of serine and threonine into the cell, with the concomitant import of sodium (symport system). This is Serine/threonine transporter SstT from Streptococcus equi subsp. equi (strain 4047).